A 256-amino-acid chain; its full sequence is Thiazole synthase (256 aa).

Lys95 serves as the catalytic Schiff-base intermediate with DXP. 1-deoxy-D-xylulose 5-phosphate is bound by residues Gly156, 182-183, and 204-205; these read AG and NT.

It belongs to the ThiG family. In terms of assembly, homotetramer. Forms heterodimers with either ThiH or ThiS.

It is found in the cytoplasm. The enzyme catalyses [ThiS sulfur-carrier protein]-C-terminal-Gly-aminoethanethioate + 2-iminoacetate + 1-deoxy-D-xylulose 5-phosphate = [ThiS sulfur-carrier protein]-C-terminal Gly-Gly + 2-[(2R,5Z)-2-carboxy-4-methylthiazol-5(2H)-ylidene]ethyl phosphate + 2 H2O + H(+). It participates in cofactor biosynthesis; thiamine diphosphate biosynthesis. Catalyzes the rearrangement of 1-deoxy-D-xylulose 5-phosphate (DXP) to produce the thiazole phosphate moiety of thiamine. Sulfur is provided by the thiocarboxylate moiety of the carrier protein ThiS. In vitro, sulfur can be provided by H(2)S. The protein is Thiazole synthase of Escherichia coli O45:K1 (strain S88 / ExPEC).